We begin with the raw amino-acid sequence, 640 residues long: Pro-neuregulin-1, membrane-bound isoform (640 aa).

Positions methionine 1–glycine 19 are excised as a propeptide. Residues methionine 1 to leucine 53 are disordered. The Extracellular portion of the chain corresponds to serine 20–arginine 242. The region spanning proline 37 to threonine 128 is the Ig-like C2-type domain. Cysteine 57 and cysteine 112 are joined by a disulfide. N-linked (GlcNAc...) asparagine glycans are attached at residues asparagine 120, asparagine 126, and asparagine 164. The EGF-like domain maps to histidine 178 to threonine 222. 3 disulfides stabilise this stretch: cysteine 182–cysteine 196, cysteine 190–cysteine 210, and cysteine 212–cysteine 221. The chain crosses the membrane as a helical span at residues valine 243–cysteine 265. The Cytoplasmic segment spans residues lysine 266–valine 640. Residues threonine 334–threonine 350 are compositionally biased toward low complexity. 4 disordered regions span residues threonine 334–threonine 360, serine 375–arginine 399, arginine 433–valine 461, and glutamate 524–phenylalanine 588. Positions proline 351–threonine 360 are enriched in polar residues. The span at glycine 387–glycine 397 shows a compositional bias: gly residues. The span at alanine 542–proline 552 shows a compositional bias: basic residues. The span at aspartate 563–glutamate 574 shows a compositional bias: low complexity.

Belongs to the neuregulin family. As to quaternary structure, the cytoplasmic domain interacts with the LIM domain region of LIMK1. Forms a ternary complex with ERBB3 and ITGAV:ITGB3 or ITGA6:ITGB4. Interacts with NRDC and BACE1. Proteolytic cleavage close to the plasma membrane on the external face leads to the release of the soluble growth factor form. In terms of processing, N- and O-glycosylated. Extensive glycosylation precedes the proteolytic cleavage. In terms of tissue distribution, type I isoforms are the predominant forms expressed in the endocardium. Isoform alpha is expressed in breast, ovary, testis, prostate, heart, skeletal muscle, lung, placenta liver, kidney, salivary gland, small intestine and brain, but not in uterus, stomach, pancreas, and spleen. Isoform 3 is the predominant form in mesenchymal cells and in non-neuronal organs, whereas isoform 6 is the major neuronal form. Isoform 8 is expressed in spinal cord and brain. Isoform 9 is the major form in skeletal muscle cells; in the nervous system it is expressed in spinal cord and brain. Also detected in adult heart, placenta, lung, liver, kidney, and pancreas. Isoform 10 is expressed in nervous system: spinal cord motor neurons, dorsal root ganglion neurons, and brain. Predominant isoform expressed in sensory and motor neurons. Not detected in adult heart, placenta, lung, liver, skeletal muscle, kidney, and pancreas. Not expressed in fetal lung, liver and kidney. Type IV isoforms are brain-specific.

The protein localises to the cell membrane. It localises to the secreted. The protein resides in the nucleus. It is found in the membrane. Functionally, direct ligand for ERBB3 and ERBB4 tyrosine kinase receptors. Concomitantly recruits ERBB1 and ERBB2 coreceptors, resulting in ligand-stimulated tyrosine phosphorylation and activation of the ERBB receptors. The multiple isoforms perform diverse functions such as inducing growth and differentiation of epithelial, glial, neuronal, and skeletal muscle cells; inducing expression of acetylcholine receptor in synaptic vesicles during the formation of the neuromuscular junction; stimulating lobuloalveolar budding and milk production in the mammary gland and inducing differentiation of mammary tumor cells; stimulating Schwann cell proliferation; implication in the development of the myocardium such as trabeculation of the developing heart. Isoform 10 may play a role in motor and sensory neuron development. Binds to ERBB4. Binds to ERBB3. Acts as a ligand for integrins and binds (via EGF domain) to integrins ITGAV:ITGB3 or ITGA6:ITGB4. Its binding to integrins and subsequent ternary complex formation with integrins and ERRB3 are essential for NRG1-ERBB signaling. Induces the phosphorylation and activation of MAPK3/ERK1, MAPK1/ERK2 and AKT1. Ligand-dependent ERBB4 endocytosis is essential for the NRG1-mediated activation of these kinases in neurons. This is Pro-neuregulin-1, membrane-bound isoform (NRG1) from Homo sapiens (Human).